We begin with the raw amino-acid sequence, 248 residues long: Mannose-binding protein C (248 aa).

Positions 1–20 are cleaved as a signal peptide; the sequence is MSLFPSLPLLLLSMVAASYS. Residues 42–99 enclose the Collagen-like domain; it reads GINGFPGKDGRDGTKGEKGEPGQGLRGLQGPPGKLGPPGNPGPSGSPGPKGQKGDPGK. The interval 43–113 is disordered; it reads INGFPGKDGR…DSSLAASERK (71 aa). Proline 47 bears the 4-hydroxyproline mark. The segment covering 49–61 has biased composition (basic and acidic residues); that stretch reads KDGRDGTKGEKGE. 4 positions are modified to 4-hydroxyproline: proline 73, proline 79, proline 82, and proline 88. A compositionally biased stretch (pro residues) spans 75–87; that stretch reads KLGPPGNPGPSGS. Positions 93-102 are enriched in basic and acidic residues; sequence QKGDPGKSPD. Residues 112-130 are a coiled coil; that stretch reads RKALQTEMARIKKWLTFSL. The region spanning 134 to 245 is the C-type lectin domain; sequence VGNKFFLTNG…CSTSHLAVCE (112 aa). 2 disulfides stabilise this stretch: cysteine 155/cysteine 244 and cysteine 222/cysteine 236.

Oligomeric complex of 3 or more homotrimers. Interacts with MASP1 and MASP2. Interacts with MEP1A and MEP1B and may inhibit their catalytic activity. Hydroxylation on proline residues within the sequence motif, GXPG, is most likely to be 4-hydroxy as this fits the requirement for 4-hydroxylation in vertebrates.

It localises to the secreted. In terms of biological role, calcium-dependent lectin involved in innate immune defense. Binds mannose, fucose and N-acetylglucosamine on different microorganisms and activates the lectin complement pathway. Binds to late apoptotic cells, as well as to apoptotic blebs and to necrotic cells, but not to early apoptotic cells, facilitating their uptake by macrophages. This chain is Mannose-binding protein C (MBL2), found in Gorilla gorilla gorilla (Western lowland gorilla).